The chain runs to 91 residues: DNA-binding protein HU (91 aa).

It belongs to the bacterial histone-like protein family.

Its function is as follows. Histone-like DNA-binding protein which is capable of wrapping DNA to stabilize it, and thus to prevent its denaturation under extreme environmental conditions. Also seems to act as a fortuitous virulence factor in delayed sequelae by binding to heparan sulfate-proteoglycans in the extracellular matrix of target organs and acting as a nidus for in situ immune complex formation. This is DNA-binding protein HU (hup) from Streptococcus downei (Streptococcus sobrinus).